A 326-amino-acid polypeptide reads, in one-letter code: tRNA-modifying protein YgfZ (326 aa).

Tryptophan 27 and tryptophan 189 together coordinate folate.

The protein belongs to the tRNA-modifying YgfZ family.

Its subcellular location is the cytoplasm. Its function is as follows. Folate-binding protein involved in regulating the level of ATP-DnaA and in the modification of some tRNAs. It is probably a key factor in regulatory networks that act via tRNA modification, such as initiation of chromosomal replication. The sequence is that of tRNA-modifying protein YgfZ from Shigella boydii serotype 4 (strain Sb227).